The primary structure comprises 410 residues: Protein TIC 214 (410 aa).

The next 6 helical transmembrane spans lie at 22–42 (FVFG…GSFI), 61–81 (GSAI…IGVI), 87–107 (LEPS…IGFL), 131–151 (AVIV…ITSI), 161–181 (LFLF…GFLI), and 210–230 (LALC…YIGL).

Belongs to the TIC214 family. Part of the Tic complex.

The protein resides in the plastid. The protein localises to the chloroplast inner membrane. In terms of biological role, involved in protein precursor import into chloroplasts. May be part of an intermediate translocation complex acting as a protein-conducting channel at the inner envelope. This is Protein TIC 214 from Mesostigma viride (Green alga).